The following is a 207-amino-acid chain: GTP cyclohydrolase 1 (207 aa).

Residues Cys-88, His-91, and Cys-162 each coordinate Zn(2+).

The protein belongs to the GTP cyclohydrolase I family. In terms of assembly, toroid-shaped homodecamer, composed of two pentamers of five dimers.

The enzyme catalyses GTP + H2O = 7,8-dihydroneopterin 3'-triphosphate + formate + H(+). It participates in cofactor biosynthesis; 7,8-dihydroneopterin triphosphate biosynthesis; 7,8-dihydroneopterin triphosphate from GTP: step 1/1. This Sulfurisphaera tokodaii (strain DSM 16993 / JCM 10545 / NBRC 100140 / 7) (Sulfolobus tokodaii) protein is GTP cyclohydrolase 1.